Consider the following 336-residue polypeptide: Probable allantoicase (336 aa).

Belongs to the allantoicase family.

The catalysed reaction is allantoate + H2O = (S)-ureidoglycolate + urea. It participates in nitrogen metabolism; (S)-allantoin degradation; (S)-ureidoglycolate from allantoate (aminidohydrolase route): step 1/1. This Acinetobacter baumannii (strain SDF) protein is Probable allantoicase.